A 211-amino-acid chain; its full sequence is Shikimate kinase (211 aa).

The disordered stretch occupies residues 1–23 (MNASANLCAASDNDPQPGDQEAA). 50–55 (GAGKTT) is an ATP binding site. Residue T54 participates in Mg(2+) binding. Substrate is bound by residues D72, R96, and G118. An ATP-binding site is contributed by R156. R175 lines the substrate pocket.

The protein belongs to the shikimate kinase family. In terms of assembly, monomer. Mg(2+) is required as a cofactor.

It localises to the cytoplasm. The catalysed reaction is shikimate + ATP = 3-phosphoshikimate + ADP + H(+). It functions in the pathway metabolic intermediate biosynthesis; chorismate biosynthesis; chorismate from D-erythrose 4-phosphate and phosphoenolpyruvate: step 5/7. Functionally, catalyzes the specific phosphorylation of the 3-hydroxyl group of shikimic acid using ATP as a cosubstrate. In Bordetella bronchiseptica (strain ATCC BAA-588 / NCTC 13252 / RB50) (Alcaligenes bronchisepticus), this protein is Shikimate kinase.